Here is an 875-residue protein sequence, read N- to C-terminus: Neurotrypsin (875 aa).

A signal peptide spans 1–20 (MTLARFVLALVLGALPEVVG). Residue Asn26 is glycosylated (N-linked (GlcNAc...) asparagine). Positions 30–87 (HHRHRHSPPPGPQYPYYLPTHQRPPRTRPPPPLPRFPRPPRALPAQRPHALQAGHTPR) are disordered. Residues 56 to 71 (TRPPPPLPRFPRPPRA) are compositionally biased toward pro residues. Positions 93–165 (CPAGELWVSV…GKVDWGYCDC (73 aa)) constitute a Kringle domain. Intrachain disulfides connect Cys93–Cys165, Cys109–Cys149, Cys138–Cys163, Cys195–Cys259, Cys208–Cys269, Cys239–Cys249, Cys305–Cys369, Cys318–Cys379, Cys349–Cys359, Cys412–Cys475, Cys425–Cys485, Cys455–Cys465, Cys525–Cys589, Cys538–Cys599, Cys569–Cys579, Cys619–Cys750, Cys661–Cys677, Cys765–Cys831, Cys794–Cys808, and Cys821–Cys850. 4 consecutive SRCR domains span residues 170-271 (VRLR…TCSF), 280-381 (IRLV…SCTP), 387-487 (IRLA…ACYP), and 500-601 (VRLM…ICDY). The interval 619–630 (CGLRLLHRRQKR) is zymogen activation region. Residues 631-874 (IIGGKNSLRG…FVPWIKSVTK (244 aa)) form the Peptidase S1 domain. The active-site Charge relay system is the His676. Residue Asn683 is glycosylated (N-linked (GlcNAc...) asparagine). Catalysis depends on Asp726, which acts as the Charge relay system. Residue Ser825 is the Charge relay system of the active site.

Belongs to the peptidase S1 family.

The protein resides in the secreted. Its function is as follows. Plays a role in neuronal plasticity and the proteolytic action may subserve structural reorganizations associated with learning and memory operations. This chain is Neurotrypsin (PRSS12), found in Macaca mulatta (Rhesus macaque).